A 109-amino-acid polypeptide reads, in one-letter code: U4-lycotoxin-Ls1a (109 aa).

The first 22 residues, 1 to 22, serve as a signal peptide directing secretion; that stretch reads MKVLVLFSVLFLTLFSYSSTEA. The propeptide occupies 23–44; sequence IDELDSDAEEDMLSLMANEQVR. The tract at residues 45–88 is knottin domain; that stretch reads AKACTPRLHDCSHDRHSCCRGELFKDVCYCFYPEGEDKTEVCSC. Cystine bridges form between C48-C63, C55-C72, C62-C88, and C74-C86. The segment at 89 to 108 is linear cationic cytotoxin domain; the sequence is QQPKSHKYIEKVVDKAKTVV.

The protein belongs to the neurotoxin 19 (CSTX) family. 05 (U4-Lctx) subfamily. As to expression, expressed by the venom gland.

Its subcellular location is the secreted. In terms of biological role, enhances the high-affinity desensitization of human P2RX3 purinoceptors. The protein is U4-lycotoxin-Ls1a of Lycosa singoriensis (Wolf spider).